Reading from the N-terminus, the 475-residue chain is Aspartate ammonia-lyase (475 aa).

L-aspartate contacts are provided by Thr-104, Ser-143, Thr-144, Asn-145, Thr-190, and His-191. The SS loop stretch occupies residues 320–329 (GSSIMPGKVN). Ser-321 acts as the Proton acceptor in catalysis. Residues Ser-322 and Lys-327 each coordinate L-aspartate.

This sequence belongs to the class-II fumarase/aspartase family. Aspartase subfamily. In terms of assembly, homotetramer.

It catalyses the reaction L-aspartate = fumarate + NH4(+). Catalyzes the reversible conversion of L-aspartate to fumarate and ammonia. This Bacillus subtilis (strain 168) protein is Aspartate ammonia-lyase.